The chain runs to 166 residues: NAD(P)H-quinone oxidoreductase subunit I, chloroplastic (166 aa).

2 4Fe-4S ferredoxin-type domains span residues 55 to 84 (GRIH…VDWK) and 95 to 124 (LNYS…MTEE). 8 residues coordinate [4Fe-4S] cluster: Cys64, Cys67, Cys70, Cys74, Cys104, Cys107, Cys110, and Cys114.

Belongs to the complex I 23 kDa subunit family. As to quaternary structure, NDH is composed of at least 16 different subunits, 5 of which are encoded in the nucleus. [4Fe-4S] cluster is required as a cofactor.

It localises to the plastid. The protein resides in the chloroplast thylakoid membrane. The catalysed reaction is a plastoquinone + NADH + (n+1) H(+)(in) = a plastoquinol + NAD(+) + n H(+)(out). The enzyme catalyses a plastoquinone + NADPH + (n+1) H(+)(in) = a plastoquinol + NADP(+) + n H(+)(out). In terms of biological role, NDH shuttles electrons from NAD(P)H:plastoquinone, via FMN and iron-sulfur (Fe-S) centers, to quinones in the photosynthetic chain and possibly in a chloroplast respiratory chain. The immediate electron acceptor for the enzyme in this species is believed to be plastoquinone. Couples the redox reaction to proton translocation, and thus conserves the redox energy in a proton gradient. The chain is NAD(P)H-quinone oxidoreductase subunit I, chloroplastic from Perymeniopsis ovalifolia.